A 536-amino-acid polypeptide reads, in one-letter code: Methyl-accepting chemotaxis aspartate transducer (536 aa).

The Cytoplasmic portion of the chain corresponds to 1-10 (MFNRIRISTS). A helical transmembrane segment spans residues 11–31 (LFLLLISFCIMQLISTGLSYV). The Periplasmic segment spans residues 32-188 (ALRADNHNLE…ASSQQAYGWS (157 aa)). Residues 64–73 (RNTLNRAGTR) are the 3 Arg may form a positively charged pocket, which binds the alpha-carboxyl group of the attractant AA. A helical membrane pass occupies residues 189–209 (IWLVAGAVLMLLVVTLSAMWW). Over 210 to 536 (LRTMLVQPLN…VKETLDCQTA (327 aa)) the chain is Cytoplasmic. The 53-residue stretch at 212–264 (TMLVQPLNIIRGHFERIASGDLSAPIEVYGRNEISQLFASLQRMQQSLIGTVG) folds into the HAMP domain. In terms of domain architecture, Methyl-accepting transducer spans 269 to 498 (GAESILIGLQ…ESASAAAALE (230 aa)). Gln-293 is subject to Glutamate methyl ester (Gln). Residue Glu-300 is modified to Glutamate methyl ester (Glu). At Gln-307 the chain carries Glutamate methyl ester (Gln). Glutamate methyl ester (Glu) occurs at positions 489 and 498.

Belongs to the methyl-accepting chemotaxis (MCP) protein family.

It localises to the cell inner membrane. In terms of biological role, this protein responds to changes in Asp concentration in the environment, transduces a signal from the outside to the inside of the cell, and facilitates sensory adaptation through various levels of methylation. Functionally, chemotactic-signal transducers respond to changes in the concentration of attractants and repellents in the environment, transduce a signal from the outside to the inside of the cell, and facilitate sensory adaptation through the variation of the level of methylation. Attractants increase the level of methylation while repellents decrease the level of methylation, the methyl groups are added by the methyltransferase CheR and removed by the methylesterase CheB. The protein is Methyl-accepting chemotaxis aspartate transducer (tas) of Klebsiella aerogenes (strain ATCC 13048 / DSM 30053 / CCUG 1429 / JCM 1235 / KCTC 2190 / NBRC 13534 / NCIMB 10102 / NCTC 10006 / CDC 819-56) (Enterobacter aerogenes).